A 406-amino-acid chain; its full sequence is Paracaspase (406 aa).

Residues 193–374 (IGNSKYSQHR…TERKNNNIST (182 aa)) are caspase-like. Residues histidine 266 and cysteine 311 contribute to the active site.

It belongs to the peptidase C14B family.

Functionally, not required for DIF-induced autophagic cell death and necrotic cell death. This is Paracaspase (pcp) from Dictyostelium discoideum (Social amoeba).